The primary structure comprises 221 residues: ATP-dependent dethiobiotin synthetase BioD (221 aa).

Residue 11-16 (DVGKTF) coordinates ATP. Residue Thr-15 participates in Mg(2+) binding. Lys-35 is an active-site residue. Thr-39 contacts substrate. ATP contacts are provided by residues Asp-44 and 103 to 106 (EGAG). Positions 44 and 103 each coordinate Mg(2+).

The protein belongs to the dethiobiotin synthetase family. Homodimer. Mg(2+) serves as cofactor.

It localises to the cytoplasm. The catalysed reaction is (7R,8S)-7,8-diammoniononanoate + CO2 + ATP = (4R,5S)-dethiobiotin + ADP + phosphate + 3 H(+). It functions in the pathway cofactor biosynthesis; biotin biosynthesis; biotin from 7,8-diaminononanoate: step 1/2. Catalyzes a mechanistically unusual reaction, the ATP-dependent insertion of CO2 between the N7 and N8 nitrogen atoms of 7,8-diaminopelargonic acid (DAPA, also called 7,8-diammoniononanoate) to form a ureido ring. In Leptospira interrogans serogroup Icterohaemorrhagiae serovar copenhageni (strain Fiocruz L1-130), this protein is ATP-dependent dethiobiotin synthetase BioD.